An 806-amino-acid chain; its full sequence is NADH-quinone oxidoreductase subunit G (806 aa).

The region spanning 15 to 93 (EMVTLTIDGV…DMVVRTQLTS (79 aa)) is the 2Fe-2S ferredoxin-type domain. Cys-49, Cys-60, Cys-63, and Cys-77 together coordinate [2Fe-2S] cluster. The 4Fe-4S His(Cys)3-ligated-type domain occupies 95–134 (IADKAQHGVMELLLINHPLDCPMCDKGGECPLQNQAMSNG). His-111, Cys-115, Cys-118, Cys-124, Cys-164, Cys-167, Cys-170, Cys-214, Cys-240, Cys-243, Cys-247, and Cys-275 together coordinate [4Fe-4S] cluster. Positions 233-289 (LVSSPSVCEHCASGCAQRTDHRRGKVLRRLAGDDPEVNEEWNCDKGRWAFTYATQPD) constitute a 4Fe-4S Mo/W bis-MGD-type domain.

This sequence belongs to the complex I 75 kDa subunit family. [2Fe-2S] cluster serves as cofactor. It depends on [4Fe-4S] cluster as a cofactor.

It catalyses the reaction a quinone + NADH + 5 H(+)(in) = a quinol + NAD(+) + 4 H(+)(out). Its function is as follows. NDH-1 shuttles electrons from NADH, via FMN and iron-sulfur (Fe-S) centers, to quinones in the respiratory chain. The immediate electron acceptor for the enzyme in this species is believed to be menaquinone. Couples the redox reaction to proton translocation (for every two electrons transferred, four hydrogen ions are translocated across the cytoplasmic membrane), and thus conserves the redox energy in a proton gradient. In Mycobacterium bovis (strain ATCC BAA-935 / AF2122/97), this protein is NADH-quinone oxidoreductase subunit G (nuoG).